A 162-amino-acid polypeptide reads, in one-letter code: Transcription elongation factor GreA (162 aa).

Residues serine 44 to isoleucine 69 adopt a coiled-coil conformation.

Belongs to the GreA/GreB family.

Functionally, necessary for efficient RNA polymerase transcription elongation past template-encoded arresting sites. The arresting sites in DNA have the property of trapping a certain fraction of elongating RNA polymerases that pass through, resulting in locked ternary complexes. Cleavage of the nascent transcript by cleavage factors such as GreA or GreB allows the resumption of elongation from the new 3'terminus. GreA releases sequences of 2 to 3 nucleotides. The protein is Transcription elongation factor GreA of Rickettsia bellii (strain RML369-C).